Here is a 256-residue protein sequence, read N- to C-terminus: Pyrroloquinoline-quinone synthase (256 aa).

Belongs to the PqqC family.

It carries out the reaction 6-(2-amino-2-carboxyethyl)-7,8-dioxo-1,2,3,4,7,8-hexahydroquinoline-2,4-dicarboxylate + 3 O2 = pyrroloquinoline quinone + 2 H2O2 + 2 H2O + H(+). Its pathway is cofactor biosynthesis; pyrroloquinoline quinone biosynthesis. Ring cyclization and eight-electron oxidation of 3a-(2-amino-2-carboxyethyl)-4,5-dioxo-4,5,6,7,8,9-hexahydroquinoline-7,9-dicarboxylic-acid to PQQ. The polypeptide is Pyrroloquinoline-quinone synthase (Rhizobium meliloti (strain 1021) (Ensifer meliloti)).